We begin with the raw amino-acid sequence, 272 residues long: Protein STAY-GREEN 1, chloroplastic (272 aa).

Residues 1 to 50 (MGTLTTSLVVPSKLNNEQQSSIFIHKTRRKCKKNQSIVPVARLFGPAIFE) constitute a chloroplast transit peptide. Residues 201–222 (TSPSSSSGGVGGVKSTSFTSNS) form a disordered region.

The protein belongs to the staygreen family. In terms of assembly, interacts with PSY1.

It localises to the plastid. The protein resides in the chloroplast. Its function is as follows. Required to trigger chlorophyll degradation during leaf senescence and fruit ripening. Binds directly PSY1 to regulate the accumulation of lycopene and beta-carotene in the maturing fruits. This is Protein STAY-GREEN 1, chloroplastic from Solanum lycopersicum (Tomato).